Here is a 441-residue protein sequence, read N- to C-terminus: BTB/POZ domain-containing protein At2g24240 (441 aa).

The region spanning 6–76 (DRIKFNVGGR…LRTGDLNVPA (71 aa)) is the BTB domain.

The protein operates within protein modification; protein ubiquitination. In terms of biological role, may act as a substrate-specific adapter of an E3 ubiquitin-protein ligase complex (CUL3-RBX1-BTB) which mediates the ubiquitination and subsequent proteasomal degradation of target proteins. This is BTB/POZ domain-containing protein At2g24240 from Arabidopsis thaliana (Mouse-ear cress).